Here is a 467-residue protein sequence, read N- to C-terminus: UDP-N-acetylmuramate--L-alanine ligase (467 aa).

114–120 lines the ATP pocket; that stretch reads GTHGKTT.

It belongs to the MurCDEF family.

The protein resides in the cytoplasm. It catalyses the reaction UDP-N-acetyl-alpha-D-muramate + L-alanine + ATP = UDP-N-acetyl-alpha-D-muramoyl-L-alanine + ADP + phosphate + H(+). The protein operates within cell wall biogenesis; peptidoglycan biosynthesis. Its function is as follows. Cell wall formation. The chain is UDP-N-acetylmuramate--L-alanine ligase from Nitrobacter hamburgensis (strain DSM 10229 / NCIMB 13809 / X14).